A 582-amino-acid polypeptide reads, in one-letter code: Putative frv operon regulatory protein (582 aa).

Residues 20–39 (PGELAQQTGVSGRTILRDID) constitute a DNA-binding region (H-T-H motif). The 140-residue stretch at 443–582 (RFFSAPGSFH…EAFMELLHKG (140 aa)) folds into the PTS EIIA type-2 domain. The residue at position 505 (H505) is a Phosphohistidine; by HPr.

In terms of biological role, could be involved in the regulation of the transcription of the FRV operon. In Escherichia coli (strain K12), this protein is Putative frv operon regulatory protein (frvR).